The sequence spans 275 residues: Rhamnulose-1-phosphate aldolase (275 aa).

E117 is an active-site residue. 3 residues coordinate Zn(2+): H141, H143, and H212.

Belongs to the aldolase class II family. RhaD subfamily. Homotetramer. The cofactor is Zn(2+).

The protein resides in the cytoplasm. The enzyme catalyses L-rhamnulose 1-phosphate = (S)-lactaldehyde + dihydroxyacetone phosphate. Its pathway is carbohydrate degradation; L-rhamnose degradation; glycerone phosphate from L-rhamnose: step 3/3. Catalyzes the reversible cleavage of L-rhamnulose-1-phosphate to dihydroxyacetone phosphate (DHAP) and L-lactaldehyde. In Salmonella paratyphi C (strain RKS4594), this protein is Rhamnulose-1-phosphate aldolase.